Reading from the N-terminus, the 306-residue chain is 33 kDa chaperonin (306 aa).

Disulfide bonds link cysteine 242–cysteine 244 and cysteine 275–cysteine 278.

Belongs to the HSP33 family. In terms of processing, under oxidizing conditions two disulfide bonds are formed involving the reactive cysteines. Under reducing conditions zinc is bound to the reactive cysteines and the protein is inactive.

The protein resides in the cytoplasm. In terms of biological role, redox regulated molecular chaperone. Protects both thermally unfolding and oxidatively damaged proteins from irreversible aggregation. Plays an important role in the bacterial defense system toward oxidative stress. The chain is 33 kDa chaperonin from Gloeobacter violaceus (strain ATCC 29082 / PCC 7421).